Here is a 504-residue protein sequence, read N- to C-terminus: L-carnitine/gamma-butyrobetaine antiporter (504 aa).

12 helical membrane-spanning segments follow: residues I10–V30, W51–F71, I92–I112, G143–V163, F195–V215, L231–L251, S263–M283, W316–A336, L347–G367, W398–A418, L446–L466, and A475–I495.

It belongs to the BCCT transporter (TC 2.A.15) family. CaiT subfamily. In terms of assembly, homotrimer.

Its subcellular location is the cell inner membrane. It carries out the reaction 4-(trimethylamino)butanoate(in) + (R)-carnitine(out) = 4-(trimethylamino)butanoate(out) + (R)-carnitine(in). Its pathway is amine and polyamine metabolism; carnitine metabolism. Catalyzes the exchange of L-carnitine for gamma-butyrobetaine. The sequence is that of L-carnitine/gamma-butyrobetaine antiporter from Escherichia coli O157:H7.